The chain runs to 205 residues: Syndecan 4-B (205 aa).

Residues 1–17 form the signal peptide; sequence MNRLLLLLALVLSGVAA. Over 18–162 the chain is Extracellular; the sequence is ESIRETETMD…FFQRTEVIVA (145 aa). The tract at residues 26 to 113 is disordered; sequence MDPTSMLEYE…HDFDETKTGR (88 aa). O-linked (Xyl...) (glycosaminoglycan) serine glycans are attached at residues serine 37, serine 73, and serine 75. Residues 44–94 show a composition bias toward acidic residues; that stretch reads VFVDEDDDDDYEDGVDYEIDSESDNDEDYSGSGDDDFDDEDNVEDEDEEET. Positions 102–113 are enriched in basic and acidic residues; the sequence is PEHDFDETKTGR. A helical transmembrane segment spans residues 163–183; the sequence is IIAGTLVGLVVAVSFIVFLVI. The Cytoplasmic segment spans residues 184 to 205; it reads RRNQNGDLVKKPIYKKTSTMEV.

The protein belongs to the syndecan proteoglycan family. In terms of assembly, interacts with the Wnt receptor fzd7 and its signal transducer dvl2/dsh. In terms of processing, O-glycosylated; contains both chondroitin sulfate and heparan sulfate. Ser-37, Ser-73 and Ser-75 can all be modified by either chondroitin sulfate or heparan sulfate, and the protein exists in forms that contain only chondroitin sulfate, only heparan sulfate and both chondroitin sulfate and heparan sulfate. As to expression, expressed in the animal hemisphere from the 4-cell to the blastula stage. During gastrulation, expressed in the involuting dorsal mesoderm and ectoderm. After involution, localized mainly to the anterior neuroectoderm. At later stages, expressed in the brain, branchial arches, pronephros, tailbud, and at low levels in the somites.

It is found in the membrane. Functionally, cell surface proteoglycan. Regulates non-canonical Wnt signaling, being necessary and sufficient for fibronectrin-mediated translocation of dvl2/dsh to the plasma membrane. Required for proper convergent extension movements during gastrulation, which shape the neural plate, and for subsequent neural tube closure. The protein is Syndecan 4-B (sdc4-b) of Xenopus laevis (African clawed frog).